The sequence spans 339 residues: Dicamba O-demethylase, oxygenase component (339 aa).

The Rieske domain maps to 8–110 (WYVAALPEEL…VVERDALIWI (103 aa)). [2Fe-2S] cluster is bound by residues C48, H50, C67, and H70. The Fe cation site is built by H159 and H164. N229, H250, and W284 together coordinate 3,6-dichloro-2-methoxybenzoate. D293 is a Fe cation binding site.

In terms of assembly, homotrimer. The dicamba O-demethylase multicomponent enzyme system is composed of an oxygenase component (DdmC) and an electron transfer component formed by a ferredoxin reductase (DdmA) and a ferredoxin (DdmB). In vitro, dicamba O-demethylase assays in which DdmA2 is substituted for DdmA1 demonstrate that the two enzymes possess nearly identical activities. Requires [2Fe-2S] cluster as cofactor.

It carries out the reaction 3,6-dichloro-2-methoxybenzoate + 2 reduced [2Fe-2S]-[ferredoxin] + O2 + 2 H(+) = 3,6-dichlorosalicylate + formaldehyde + 2 oxidized [2Fe-2S]-[ferredoxin] + H2O. With respect to regulation, activity enhanced by Fe(2+) and Mg(2+) ions. Its function is as follows. Component of the dicamba O-demethylase multicomponent enzyme system involved in the degradation of the herbicide dicamba. In vitro, catalyzes the O-demethylation of 2-methoxy-3,6-dichlorobenzoic acid (dicamba) to yield 3,6-dichlorosalicylic acid (DCSA) via an exocyclic monooxygenation. In Stenotrophomonas maltophilia (Pseudomonas maltophilia), this protein is Dicamba O-demethylase, oxygenase component.